The primary structure comprises 360 residues: Phospho-N-acetylmuramoyl-pentapeptide-transferase (360 aa).

Helical transmembrane passes span 27 to 47 (GAIA…IKSL), 72 to 92 (TPTM…LLWA), 94 to 114 (LSNH…AIGF), 135 to 155 (LACE…LGTP), 167 to 187 (GYVV…IVAS), 199 to 219 (GLAI…AYLV), 236 to 256 (AGEL…FLWF), 263 to 283 (IFMG…IAVA), 289 to 309 (VLAI…VQVV), and 337 to 357 (QVVV…LSTL).

The protein belongs to the glycosyltransferase 4 family. MraY subfamily. The cofactor is Mg(2+).

It is found in the cell inner membrane. The enzyme catalyses UDP-N-acetyl-alpha-D-muramoyl-L-alanyl-gamma-D-glutamyl-meso-2,6-diaminopimeloyl-D-alanyl-D-alanine + di-trans,octa-cis-undecaprenyl phosphate = di-trans,octa-cis-undecaprenyl diphospho-N-acetyl-alpha-D-muramoyl-L-alanyl-D-glutamyl-meso-2,6-diaminopimeloyl-D-alanyl-D-alanine + UMP. The protein operates within cell wall biogenesis; peptidoglycan biosynthesis. Its function is as follows. Catalyzes the initial step of the lipid cycle reactions in the biosynthesis of the cell wall peptidoglycan: transfers peptidoglycan precursor phospho-MurNAc-pentapeptide from UDP-MurNAc-pentapeptide onto the lipid carrier undecaprenyl phosphate, yielding undecaprenyl-pyrophosphoryl-MurNAc-pentapeptide, known as lipid I. In Beijerinckia indica subsp. indica (strain ATCC 9039 / DSM 1715 / NCIMB 8712), this protein is Phospho-N-acetylmuramoyl-pentapeptide-transferase.